The following is a 309-amino-acid chain: tRNA uridine(34) hydroxylase (309 aa).

The Rhodanese domain maps to 130–224 (SDPDTIVIDT…YLEEVPQEES (95 aa)). Cys184 acts as the Cysteine persulfide intermediate in catalysis.

The protein belongs to the TrhO family.

The enzyme catalyses uridine(34) in tRNA + AH2 + O2 = 5-hydroxyuridine(34) in tRNA + A + H2O. Catalyzes oxygen-dependent 5-hydroxyuridine (ho5U) modification at position 34 in tRNAs. The chain is tRNA uridine(34) hydroxylase from Rhizobium leguminosarum bv. trifolii (strain WSM2304).